A 164-amino-acid polypeptide reads, in one-letter code: SsrA-binding protein (164 aa).

This sequence belongs to the SmpB family.

It localises to the cytoplasm. In terms of biological role, required for rescue of stalled ribosomes mediated by trans-translation. Binds to transfer-messenger RNA (tmRNA), required for stable association of tmRNA with ribosomes. tmRNA and SmpB together mimic tRNA shape, replacing the anticodon stem-loop with SmpB. tmRNA is encoded by the ssrA gene; the 2 termini fold to resemble tRNA(Ala) and it encodes a 'tag peptide', a short internal open reading frame. During trans-translation Ala-aminoacylated tmRNA acts like a tRNA, entering the A-site of stalled ribosomes, displacing the stalled mRNA. The ribosome then switches to translate the ORF on the tmRNA; the nascent peptide is terminated with the 'tag peptide' encoded by the tmRNA and targeted for degradation. The ribosome is freed to recommence translation, which seems to be the essential function of trans-translation. This Gluconobacter oxydans (strain 621H) (Gluconobacter suboxydans) protein is SsrA-binding protein.